The sequence spans 289 residues: dTDP-rhamnosyl transferase RfbG (289 aa).

Belongs to the glycosyltransferase 2 family.

It participates in bacterial outer membrane biogenesis; lipopolysaccharide biosynthesis. In Shigella flexneri, this protein is dTDP-rhamnosyl transferase RfbG (rfbG).